The sequence spans 136 residues: Large ribosomal subunit protein uL16 (136 aa).

The protein belongs to the universal ribosomal protein uL16 family. In terms of assembly, part of the 50S ribosomal subunit.

Its function is as follows. Binds 23S rRNA and is also seen to make contacts with the A and possibly P site tRNAs. This Psychromonas ingrahamii (strain DSM 17664 / CCUG 51855 / 37) protein is Large ribosomal subunit protein uL16.